A 76-amino-acid polypeptide reads, in one-letter code: DNA-directed RNA polymerase subunit epsilon (76 aa).

Belongs to the RNA polymerase subunit epsilon family. In terms of assembly, RNAP is composed of a core of 2 alpha, a beta and a beta' subunit. The core is associated with a delta subunit, and at least one of epsilon or omega. When a sigma factor is associated with the core the holoenzyme is formed, which can initiate transcription.

The catalysed reaction is RNA(n) + a ribonucleoside 5'-triphosphate = RNA(n+1) + diphosphate. Its function is as follows. A non-essential component of RNA polymerase (RNAP). This Lactococcus lactis subsp. cremoris (strain MG1363) protein is DNA-directed RNA polymerase subunit epsilon.